The primary structure comprises 244 residues: uncharacterized protein (244 aa).

This is an uncharacterized protein from Saccharomyces cerevisiae (strain ATCC 204508 / S288c) (Baker's yeast).